A 128-amino-acid chain; its full sequence is Saitohin (128 aa).

The segment at 77-128 (SYSSEESSRNGAEQGRQLSIEGPFQGQNCPSHPAAALPLPMRGESQATSCQV) is disordered.

In terms of assembly, interacts with PRDX6.

Its subcellular location is the cytoplasm. The protein resides in the nucleus. In Gorilla gorilla gorilla (Western lowland gorilla), this protein is Saitohin (STH).